The sequence spans 213 residues: Proton-translocating ferredoxin:NAD(+) oxidoreductase complex subunit E (213 aa).

Helical transmembrane passes span 11-31 (GLIA…ALAT), 39-59 (FTMG…VSII), 69-89 (VPVY…VMQA), 93-113 (LLYK…IILA), 128-148 (FFDG…IGMI), and 170-190 (ALIM…VAIV).

The protein belongs to the NqrDE/RnfAE family. The complex is composed of six subunits: RnfA, RnfB, RnfC, RnfD, RnfE and RnfG.

The protein resides in the cell membrane. In terms of biological role, part of a membrane-bound complex that couples electron transfer with translocation of ions across the membrane. Couples electron transfer from reduced ferredoxin to NAD(+) with translocation of H(+) out of the cell. Essential for energy conservation during autotrophic growth. Contributes to ATP synthesis during heterotrophic growth. The sequence is that of Proton-translocating ferredoxin:NAD(+) oxidoreductase complex subunit E from Clostridium ljungdahlii (strain ATCC 55383 / DSM 13528 / PETC).